Reading from the N-terminus, the 152-residue chain is Small ribosomal subunit protein uS11 (152 aa).

The protein belongs to the universal ribosomal protein uS11 family. As to quaternary structure, component of the small ribosomal subunit. Part of the small subunit (SSU) processome, composed of more than 70 proteins and the RNA chaperone small nucleolar RNA (snoRNA) U3.

Its subcellular location is the cytoplasm. It localises to the nucleus. The protein resides in the nucleolus. Component of the small ribosomal subunit. The ribosome is a large ribonucleoprotein complex responsible for the synthesis of proteins in the cell. Part of the small subunit (SSU) processome, first precursor of the small eukaryotic ribosomal subunit. During the assembly of the SSU processome in the nucleolus, many ribosome biogenesis factors, an RNA chaperone and ribosomal proteins associate with the nascent pre-rRNA and work in concert to generate RNA folding, modifications, rearrangements and cleavage as well as targeted degradation of pre-ribosomal RNA by the RNA exosome. This is Small ribosomal subunit protein uS11 (rps-14) from Caenorhabditis elegans.